Here is a 228-residue protein sequence, read N- to C-terminus: 2-C-methyl-D-erythritol 4-phosphate cytidylyltransferase (228 aa).

It belongs to the IspD/TarI cytidylyltransferase family. IspD subfamily.

It catalyses the reaction 2-C-methyl-D-erythritol 4-phosphate + CTP + H(+) = 4-CDP-2-C-methyl-D-erythritol + diphosphate. It functions in the pathway isoprenoid biosynthesis; isopentenyl diphosphate biosynthesis via DXP pathway; isopentenyl diphosphate from 1-deoxy-D-xylulose 5-phosphate: step 2/6. Its function is as follows. Catalyzes the formation of 4-diphosphocytidyl-2-C-methyl-D-erythritol from CTP and 2-C-methyl-D-erythritol 4-phosphate (MEP). In Trichormus variabilis (strain ATCC 29413 / PCC 7937) (Anabaena variabilis), this protein is 2-C-methyl-D-erythritol 4-phosphate cytidylyltransferase.